A 234-amino-acid polypeptide reads, in one-letter code: Orotidine 5'-phosphate decarboxylase (234 aa).

Substrate is bound by residues Asp11, Lys33, 60–69 (DLKFHDIPNT), Thr120, Arg181, Gln190, Gly210, and Arg211. The active-site Proton donor is Lys62.

This sequence belongs to the OMP decarboxylase family. Type 1 subfamily. Homodimer.

It carries out the reaction orotidine 5'-phosphate + H(+) = UMP + CO2. It functions in the pathway pyrimidine metabolism; UMP biosynthesis via de novo pathway; UMP from orotate: step 2/2. Its function is as follows. Catalyzes the decarboxylation of orotidine 5'-monophosphate (OMP) to uridine 5'-monophosphate (UMP). This is Orotidine 5'-phosphate decarboxylase from Aliivibrio fischeri (strain ATCC 700601 / ES114) (Vibrio fischeri).